A 142-amino-acid polypeptide reads, in one-letter code: MGLTLSGRYISLFLAVQIAYLLQAVRAAGKCGTVFKGFSDCLLQLGENMANYPQELDEKENLQTICTYWDDFHSCATTALADCQEGATDLWEKLKKESRNLDFRGSLFELCAGGNGAIRSSVPFGVTLLITALSALVTWMQF.

The signal sequence occupies residues 1–27 (MGLTLSGRYISLFLAVQIAYLLQAVRA). Residue Ala-112 is the site of GPI-anchor amidated alanine attachment. Positions 113–142 (GGNGAIRSSVPFGVTLLITALSALVTWMQF) are cleaved as a propeptide — removed in mature form.

It belongs to the neuritin family.

It localises to the cell membrane. The protein localises to the synapse. Modulates postsynaptic dendritic arbor elaboration and synaptic maturation. This chain is Neuritin (nrn1), found in Danio rerio (Zebrafish).